A 425-amino-acid polypeptide reads, in one-letter code: Voltage-dependent calcium channel gamma-8 subunit (425 aa).

4 helical membrane-spanning segments follow: residues 19–39 (VQVL…TIAI), 129–149 (SIFP…VAAS), 158–178 (IILG…IGVI), and 208–228 (FGGL…NIYI). Phosphoserine occurs at positions 252 and 255. Residues 272–304 (RRSRSSSRSSEPSPSRDASPGGPGGPGFASTDI) are disordered. Over residues 277 to 287 (SSRSSEPSPSR) the composition is skewed to low complexity. Residues 318–338 (VAAGLAGAGGGGGGAVGAFGG) form a helical membrane-spanning segment. Gly residues predominate over residues 343–354 (AGGGGGGGGGAG). Disordered stretches follow at residues 343 to 365 (AGGG…ASGF) and 377 to 425 (GGGV…TTPV). A compositionally biased stretch (pro residues) spans 387-401 (PPAPPAPAPPAPSAP). The span at 412-425 (ASNTNTLNRKTTPV) shows a compositional bias: polar residues.

The protein belongs to the PMP-22/EMP/MP20 family. CACNG subfamily. In terms of assembly, interacts with CACNA1C. Identified in a complex with the L-type calcium channel subunits CACNA1C, CACNA2D1 and either CACNB1 or CACNB2. Acts as an auxiliary subunit for AMPA-selective glutamate receptors (AMPARs). Found in a complex with GRIA1, GRIA2, GRIA3, GRIA4, CNIH2, CNIH3, CACNG2, CACNG3, CACNG4, CACNG5 and CACNG7. Interacts with CNIH2. Found in a complex with GRIA1, GRIA2, GRIA3, GRIA4, DLG4 and CNIH2. Post-translationally, palmitoylated. Probably palmitoylated by ZDHHC3 and ZDHHC7. Detected in heart left ventricle.

Its subcellular location is the cell membrane. It is found in the postsynaptic density membrane. Its function is as follows. Regulates the activity of L-type calcium channels that contain CACNA1C as pore-forming subunit. Regulates the trafficking and gating properties of AMPA-selective glutamate receptors (AMPARs). Promotes their targeting to the cell membrane and synapses and modulates their gating properties by slowing their rates of activation, deactivation and desensitization and by mediating their resensitization. Does not show subunit-specific AMPA receptor regulation and regulates all AMPAR subunits. In Homo sapiens (Human), this protein is Voltage-dependent calcium channel gamma-8 subunit.